The primary structure comprises 60 residues: Large ribosomal subunit protein uL30 (60 aa).

Belongs to the universal ribosomal protein uL30 family. As to quaternary structure, part of the 50S ribosomal subunit.

This Shewanella baltica (strain OS223) protein is Large ribosomal subunit protein uL30.